Reading from the N-terminus, the 130-residue chain is Small ribosomal subunit protein bS6 (130 aa).

A disordered region spans residues 99 to 130; sequence ASPMVKAKDERRERHDFASEANDDSEAGDSEE. Residues 104–116 are compositionally biased toward basic and acidic residues; sequence KAKDERRERHDFA. Residues 119 to 130 are compositionally biased toward acidic residues; the sequence is ANDDSEAGDSEE.

Belongs to the bacterial ribosomal protein bS6 family.

In terms of biological role, binds together with bS18 to 16S ribosomal RNA. The polypeptide is Small ribosomal subunit protein bS6 (Yersinia enterocolitica serotype O:8 / biotype 1B (strain NCTC 13174 / 8081)).